The primary structure comprises 423 residues: Methylenetetrahydrofolate--tRNA-(uracil-5-)-methyltransferase TrmFO 2 (423 aa).

8–13 (GAGLSG) contributes to the FAD binding site.

It belongs to the MnmG family. TrmFO subfamily. Requires FAD as cofactor.

The protein localises to the cytoplasm. It catalyses the reaction uridine(54) in tRNA + (6R)-5,10-methylene-5,6,7,8-tetrahydrofolate + NADH + H(+) = 5-methyluridine(54) in tRNA + (6S)-5,6,7,8-tetrahydrofolate + NAD(+). The enzyme catalyses uridine(54) in tRNA + (6R)-5,10-methylene-5,6,7,8-tetrahydrofolate + NADPH + H(+) = 5-methyluridine(54) in tRNA + (6S)-5,6,7,8-tetrahydrofolate + NADP(+). In terms of biological role, catalyzes the folate-dependent formation of 5-methyl-uridine at position 54 (M-5-U54) in all tRNAs. The chain is Methylenetetrahydrofolate--tRNA-(uracil-5-)-methyltransferase TrmFO 2 from Mycoplasma capricolum subsp. capricolum (strain California kid / ATCC 27343 / NCTC 10154).